A 1042-amino-acid chain; its full sequence is Aldehyde reductase lnaA (1042 aa).

Residues 29 to 425 form an adenylation (A) domain region; it reads HAFLNPSAMA…GRRDHQVKVR (397 aa). A Carrier domain is found at 532-609; sequence DNEDSTRGKL…RLAGILEERI (78 aa). Serine 569 carries the post-translational modification O-(pantetheine 4'-phosphoryl)serine. Residues 655–897 are short-chain dehydrogenase/reductase (R) domain; that stretch reads LTGATGFVGS…FVPVDYVNAV (243 aa).

It belongs to the NRP synthetase family.

It carries out the reaction L-tyrosinal + AMP + diphosphate + NADP(+) = L-tyrosine + ATP + NADPH + H(+). It functions in the pathway secondary metabolite biosynthesis. Functionally, non-canonical nonribosomal peptide synthetase; part of the lna gene cluster that mediates the biosynthesis of diastereomeric piperazines. Lna and lnb clusters encode sets of enzymes that produce overlapping sets of previously undescribed metabolites such as piperazinomycin-like metabolites or morpholine. The lna and lnb biosynthetic pathways appear to be part of a signaling network that controls the formation of sclerotia, a resilient overwintering structure. One primary function of the non-canonical nonribosomal peptide synthetases lnaA and lnbA consists in the reduction of L-tyrosine. The presence in the clusters of tailoring enzymes such as the oxidoreductases lnaB, lnbB, lnaE or lnbE, as well as of the cytochrome P450 monooxygenases lnaC, lnaD, or lnbC, might explain formation of various diastereomeric piperazines. The protein is Aldehyde reductase lnaA of Aspergillus flavus (strain ATCC 200026 / FGSC A1120 / IAM 13836 / NRRL 3357 / JCM 12722 / SRRC 167).